The primary structure comprises 485 residues: Glucagon receptor (485 aa).

Residues 1-26 (MPLTQLHCPHLLLLLLVLSCLPEAPS) form the signal peptide. Over 27–137 (AQVMDFLFEK…EIEVQKGVAK (111 aa)) the chain is Extracellular. Cystine bridges form between Cys44-Cys68, Cys59-Cys101, and Cys82-Cys122. Residues Asn47, Asn60, Asn75, Asn79, and Asn118 are each glycosylated (N-linked (GlcNAc...) asparagine). A helical transmembrane segment spans residues 138 to 162 (MYSSQQVMYTVGYSLSLGALLLALV). Topologically, residues 163-174 (ILLGLRKLHCTR) are cytoplasmic. A helical membrane pass occupies residues 175–199 (NYIHGNLFASFVLKAGSVLVIDWLL). Residues 200–226 (KTRYSQKIGDDLSVSVWLSDGAMAGCR) are Extracellular-facing. A disulfide bond links Cys225 and Cys295. The chain crosses the membrane as a helical span at residues 227–250 (VATVIMQYGIIANYCWLLVEGVYL). Topologically, residues 251–264 (YSLLSLATFSERSF) are cytoplasmic. The helical transmembrane segment at 265 to 286 (FSLYLGIGWGAPLLFVIPWVVV) threads the bilayer. The Extracellular segment spans residues 287–304 (KCLFENVQCWTSNDNMGF). The helical transmembrane segment at 305-327 (WWILRIPVFLALLINFFIFVHII) threads the bilayer. The Cytoplasmic portion of the chain corresponds to 328–351 (HLLVAKLRAHQMHYADYKFRLARS). An important for allosteric inhibitor binding region spans residues 351 to 354 (STLT). The chain crosses the membrane as a helical span at residues 352-370 (TLTLIPLLGVHEVVFAFVT). Residues 371-382 (DEHAQGTLRSTK) are Extracellular-facing. A helical transmembrane segment spans residues 383 to 403 (LFFDLFLSSFQGLLVAVLYCF). Topologically, residues 404–485 (LNKEVQAELM…SLPRLADSPT (82 aa)) are cytoplasmic. Positions 457–475 (AGSSSGTGCVPSMETSLAS) are enriched in polar residues. Residues 457 to 485 (AGSSSGTGCVPSMETSLASSLPRLADSPT) are disordered. Residues Ser460 and Ser476 each carry the phosphoserine modification.

This sequence belongs to the G-protein coupled receptor 2 family. Post-translationally, ligand-binding promotes phosphorylation of serine residues in the C-terminal cytoplasmic domain. Phosphorylation is important for receptor endocytosis after ligand-binding. In terms of tissue distribution, expressed predominantly in liver, kidney, adrenal, lung and stomach, while lower levels of expression are detected in brown and white adipose tissue, cerebellum, duodenum and heart.

The protein resides in the cell membrane. Functionally, G-protein coupled receptor for glucagon that plays a central role in the regulation of blood glucose levels and glucose homeostasis. Regulates the rate of hepatic glucose production by promoting glycogen hydrolysis and gluconeogenesis. Plays an important role in mediating the responses to fasting. Ligand binding causes a conformation change that triggers signaling via guanine nucleotide-binding proteins (G proteins) and modulates the activity of down-stream effectors, such as adenylate cyclase. Promotes activation of adenylate cyclase. Besides, plays a role in signaling via a phosphatidylinositol-calcium second messenger system. The chain is Glucagon receptor (Gcgr) from Mus musculus (Mouse).